The primary structure comprises 403 residues: MAFSFGQQGSSIKAPSIGSTGVFGQSNTTKPTAPFGSGSIFGSTNTNVGAGGPTGSSSAPPFGNSIFGKTQQQPTTSFSNTTTNAPQSTVFGQNAASRTGNSNTQPLFSWSTVNNPTKPVDETNATIPSSLLLSSGISPNATVSNAQYGPAQPPSVEEQVQKILNAWNLNHPDCAFQRFFYNKVPVEQAALYVKPPNYNQQKWDEAVANRPSNSVVPVLAVGFPDVQKRINMQIQQVNTYRIRMREIVETLGRLSNKHDLDFSIKLAEAKNRHVRLSERILRLAIKVHVLRHRGYALKPNEEELRKKLDDLTKSLNNPEIFGRLNEIWARITLIFEGEKISEDQRSNLAKGVVDWRKNSDQLEVITDVLRDHQVGLSYVVKLMQEDLATLNKQLTEHVPQSQK.

Polar residues-rich tracts occupy residues 1–31 (MAFSFGQQGSSIKAPSIGSTGVFGQSNTTKP) and 67–124 (FGKT…DETN). Residues 1–124 (MAFSFGQQGS…NPTKPVDETN (124 aa)) are disordered.

The protein resides in the cytoplasm. It is found in the nucleus. Functionally, functions as a component of the nuclear pore complex (NPC). NPC components, collectively referred to as nucleoporins (NUPs), can play the role of both NPC structural components and of docking or interaction partners for transiently associated nuclear transport factors. Active directional transport is assured by both, a Phe-Gly (FG) repeat affinity gradient for these transport factors across the NPC and a transport cofactor concentration gradient across the nuclear envelope. The polypeptide is Nucleoporin nup44 (nup44) (Schizosaccharomyces pombe (strain 972 / ATCC 24843) (Fission yeast)).